The primary structure comprises 389 residues: Major outer membrane porin (389 aa).

An N-terminal signal peptide occupies residues 1–23 (MKKLLKSALLSAAFAGSVGSLQA).

Belongs to the chlamydial porin (CP) (TC 1.B.2) family. As to quaternary structure, part of a disulfide cross-linked outer membrane complex (COMC) composed of the major outer membrane porin (MOMP), the small cysteine-rich protein (OmcA) and the large cysteine-rich periplasmic protein (OmcB).

It localises to the cell outer membrane. Functionally, in elementary bodies (EBs, the infectious stage, which is able to survive outside the host cell) provides the structural integrity of the outer envelope through disulfide cross-links with the small cysteine-rich protein and the large cysteine-rich periplasmic protein. It has been described in publications as the Sarkosyl-insoluble COMC (Chlamydia outer membrane complex), and serves as the functional equivalent of peptidoglycan. In terms of biological role, permits diffusion of specific solutes through the outer membrane. The sequence is that of Major outer membrane porin (ompA) from Chlamydia pneumoniae (Chlamydophila pneumoniae).